Here is a 114-residue protein sequence, read N- to C-terminus: Dihydroneopterin monophosphate aldolase (114 aa).

Positions 15, 26, and 28 each coordinate Zn(2+).

It belongs to the PTPS family. Requires Zn(2+) as cofactor.

It catalyses the reaction 7,8-dihydroneopterin 3'-phosphate = glycolaldehyde phosphate + 6-hydroxymethyl-7,8-dihydropterin. In terms of biological role, catalyzes the conversion of 7,8-dihydroneopterin monophosphate (H2NMP) to 6-hydroxymethyl-7,8-dihydropterin (6-HMD). Cannot use 7,8-dihydroneopterin (H2Neo) or 7,8-dihydroneopterin triphosphate (H2NTP) as substrate. The sequence is that of Dihydroneopterin monophosphate aldolase from Pyrococcus furiosus (strain ATCC 43587 / DSM 3638 / JCM 8422 / Vc1).